Consider the following 239-residue polypeptide: Probable transcriptional regulatory protein BPUM_0743 (239 aa).

This sequence belongs to the TACO1 family. YeeN subfamily.

The protein localises to the cytoplasm. The chain is Probable transcriptional regulatory protein BPUM_0743 from Bacillus pumilus (strain SAFR-032).